The primary structure comprises 422 residues: Probable metallocarboxypeptidase A (422 aa).

The N-terminal stretch at 1-17 is a signal peptide; sequence MRSVLSLALLAANVVTA. Positions 18–112 are cleaved as a propeptide — activation peptide; the sequence is AVVAPFDYSG…FEAYSAGYAP (95 aa). Positions 119–419 constitute a Peptidase M14 domain; that stretch reads SYHSYQDHLS…AGTVAMLKAV (301 aa). Histidine 179 and glutamate 182 together coordinate Zn(2+). Substrate contacts are provided by residues 179-182, arginine 237, and 254-255; these read HARE and NR. Cysteine 248 and cysteine 271 are disulfide-bonded. A Zn(2+)-binding site is contributed by histidine 309. Residue 310 to 311 participates in substrate binding; it reads SY. Glutamate 385 serves as the catalytic Proton donor/acceptor.

It belongs to the peptidase M14 family. Requires Zn(2+) as cofactor.

The protein resides in the secreted. Its function is as follows. Extracellular metalloprotease that contributes to pathogenicity. This Arthroderma benhamiae (strain ATCC MYA-4681 / CBS 112371) (Trichophyton mentagrophytes) protein is Probable metallocarboxypeptidase A (MCPA).